The following is a 1164-amino-acid chain: Avirulence protein AvrBs3 (1164 aa).

Disordered regions lie at residues 1 to 68 and 128 to 152; these read MDPI…SAGS and ARPPRAKPAPRRRAAQPSDASPAAQ. Over residues 131-141 the composition is skewed to basic residues; that stretch reads PRAKPAPRRRA. Low complexity predominate over residues 142 to 151; that stretch reads AQPSDASPAA. A Cryptic repeat -1 repeat occupies 225–254; the sequence is IVGVGKQWSGARALEALLTVAGELRGPPLQ. The Cryptic repeat 0 repeat unit spans residues 255–288; sequence LDTGQLLKIAKRGGVTAVEAVHAWRNALTGAPLN. Core repeat repeat units lie at residues 289–322, 323–356, 357–390, 391–424, 425–458, 459–492, 493–526, 527–560, 561–594, 595–628, 629–662, 663–696, 697–730, 731–764, 765–798, 799–832, and 833–866; these read LTPEQVVAIASHDGGKQALETVQRLLPVLCQAHG, LTPQQVVAIASNGGGKQALETVQRLLPVLCQAHG, LTPQQVVAIASNSGGKQALETVQRLLPVLCQAHG, LTPEQVVAIASNGGGKQALETVQRLLPVLCQAHG, LTPEQVVAIASNIGGKQALETVQALLPVLCQAHG, LTPEQVVAIASNSGGKQALETVQALLPVLCQAHG, LTPEQVVAIASNSGGKQALETVQRLLPVLCQAHG, and LTPQQVVAIASNGGGRPALETVQRLLPVLCQAHG. A Core repeat 17.5 repeat occupies 867-886; it reads LTPQQVVAIASNGGGRPALE. A Nuclear localization signal NLS1 motif is present at residues 1021–1024; the sequence is KRAK. The span at 1048-1060 shows a compositional bias: basic and acidic residues; the sequence is DLDAPSPMHEGDQ. The interval 1048-1091 is disordered; sequence DLDAPSPMHEGDQTRASSRKRSRSDRAVTGPSAQQSFEVRVPEQ. The short motif at 1067-1070 is the Nuclear localization signal NLS2 element; that stretch reads KRSR. The Nuclear localization signal NLS3 signature appears at 1104 to 1107; that stretch reads KRPR. Positions 1135–1164 are acidic activation domain AAD; it reads QDEDPFAGAADDFPAFNEEELAWLMELLPQ.

Belongs to the transcription activator-like effector (TALE) family. As to quaternary structure, forms a homodimer in the plant cell cytoplasm, prior to nuclear import. Interacts with the plant cell importin alpha-1 (Caimp alpha-1) and importin alpha-2 (Caimp alpha-2) via the nuclear localization signal NLS2, but not via NLS3.

The protein resides in the secreted. The protein localises to the host nucleus. Avirulence protein. Acts as a transcription factor in C.annuum plants. In susceptible plants lacking the Bs3 resistance gene induces expression of a number of genes, including genes homologous to a family of auxin-induced genes, alpha-expansin genes, pectate lyase, anthocyanidin glucoside rhamnosyl transferase and at least one transcription factor, UPA20. Their expression leads to plant hypertrophy in mesophyll cells, probably mainly mediated by UPA20. In resistant plants induces the hypersensitive response (HR), by inducing transcription of plant Bs3 which induces HR; a mutated AvrBs3 missing repeats 11-14 does not induce expression of Bs3 but does induce Bs3-E, a Bs3 allele with a modified promoter. Binds DNA corresponding to the upa-box in sequence-specific manner. In Xanthomonas euvesicatoria, this protein is Avirulence protein AvrBs3 (avrBs3).